The primary structure comprises 612 residues: Proton channel OTOP1 (612 aa).

Positions 1–46 are enriched in low complexity; the sequence is MLEGLGSPASPRAAASASVAGSSGPAACSPPSSSAPRSPESPAPRR. The segment at 1 to 50 is disordered; the sequence is MLEGLGSPASPRAAASASVAGSSGPAACSPPSSSAPRSPESPAPRRGGVR. The Cytoplasmic portion of the chain corresponds to 1–58; that stretch reads MLEGLGSPASPRAAASASVAGSSGPAACSPPSSSAPRSPESPAPRRGGVRASVPQKLA. Residues 59-80 form a helical membrane-spanning segment; that stretch reads EMLSSQYGLIVFVAGLLLLLAW. At 81-88 the chain is on the extracellular side; sequence AVHAAGVS. A helical transmembrane segment spans residues 89–112; sequence KSDLLCFLTALMLLQLLWMLWYVG. The Cytoplasmic portion of the chain corresponds to 113–130; that stretch reads RSSAHRRLFRLKDTHAGA. A helical membrane pass occupies residues 131 to 153; it reads GWLRGSITLFAVITVILGCLKIG. At 154 to 163 the chain is on the extracellular side; sequence YFIGFSECLS. A helical membrane pass occupies residues 164-188; the sequence is ATEGVFPVTHSVHTLLQVYFLWGHA. Residues 189–196 lie on the Cytoplasmic side of the membrane; that stretch reads KDIIQSFK. Residues 197–223 form a helical membrane-spanning segment; sequence TLERFGVIHSVFTNLLLWANGVLNESK. The Extracellular portion of the chain corresponds to 224 to 264; sequence HQLNEHKERLITLGFGNITTVLDDHTPQCNCTPPTLCTAIS. Residues 265-290 traverse the membrane as a helical segment; sequence HGIYYLYPFNIEYQILASTMLYVLWK. Residues 291–311 are Cytoplasmic-facing; it reads NIGRKVDSHQHQKMQFKSDGV. A helical membrane pass occupies residues 312-334; it reads MVGAVLGLTVLAATIAVVVVYLI. Topologically, residues 335–344 are extracellular; the sequence is HIGRSKTKSE. Residues 345-370 traverse the membrane as a helical segment; sequence SALIMFYLYAITLLMLMGAAGLAGIR. The Cytoplasmic segment spans residues 371–388; the sequence is IYRIDEKSLDESKNPARK. A helical transmembrane segment spans residues 389-413; it reads LDSDLLVGTASGSWLISWGSILAIL. Topologically, residues 414–423 are extracellular; the sequence is CAEGHPRYTW. Residues 424 to 444 traverse the membrane as a helical segment; the sequence is YNLPYSILAIVEKYIQNLFIF. Over 445–544 the chain is Cytoplasmic; sequence ESIHREPEKL…QGNAKRKVLR (100 aa). The interval 499–525 is disordered; sequence ANGNVCMRESHDKEEEKQEESSWGGSP. Positions 506-518 are enriched in basic and acidic residues; it reads RESHDKEEEKQEE. The helical transmembrane segment at 545–563 threads the bilayer; it reads NIAAFLFLCNISLWIPPAF. The Extracellular portion of the chain corresponds to 564 to 581; the sequence is GCRPEYDNGLEEIVFGFE. The helical transmembrane segment at 582-605 threads the bilayer; the sequence is PWIIVVNLAMPFSIFYRMHAAASL. At 606 to 612 the chain is on the cytoplasmic side; that stretch reads FEVYCKI.

The protein belongs to the otopetrin family. As to quaternary structure, homodimer. Interacts with STAT1, independently of STAT1 phosphorylation status.

It is found in the cell membrane. The protein resides in the cell projection. It localises to the microvillus. The enzyme catalyses H(+)(in) = H(+)(out). Its activity is regulated as follows. Activated by both acid and alkali, with proton influx in response to extracellular acid and proton efflux during alkali stimulation. Inhibited by Zn(2+); this inhibition is thought to be pH-sensitive. Currents evoked in response to mild acid (pH 6.0) stimulus may also be mildly potentiated by exposure to Zn(2+). Activated by NH(4)Cl. Its function is as follows. Proton-selective ion channel. Biphasically modulated by acid and alkali, mediating proton influx and efflux in response to extracellular acid and base stimulation, respectively. Sour taste receptor, which carries inward currents in response to extracellular acidification. Sensor for ammonium chloride (NH(4)Cl) in taste receptor cells. NH(4)Cl acts by increasing the intracellular pH, thereby generating a driving force for proton entry through OTOP1 channel. Might also participate in alkaline sensation. Plays a role in the regulation of Ca(2+) flux in response to purigenic (ATP, ADP and UDP) stimuli, leading to increase in cytosolic Ca(2+) due to influx of extracellular calcium. May play this role by inhibiting P2Y purinoceptor-mediated Ca(2+) release in a Ca(2+)-dependent manner and promote an influx of Ca(2+) in response to ATP. Through this mechanism and possibly others, plays a role in the formation and function of calcium carbonate-based structures in the vestibular system of the inner ear, called otoconia, that sense gravity and linear acceleration. In obesity, may attenuate adipose tissue inflammation, through the negative regulation of IFNG signaling, hence may play an adaptive role in the maintainance of metabolic homeostasis. Following alkali activation, may also be permeable Na(+), K(+), Cs(+) and Li(+). This is Proton channel OTOP1 from Homo sapiens (Human).